The sequence spans 229 residues: Potassium/proton antiporter CemA (229 aa).

Transmembrane regions (helical) follow at residues 7–27 (FTPLLYLASLVFLPWWISLSF), 114–134 (IICFVILSGYSIWGNEELVIL), and 189–209 (ILSGLVSTFPVILDTLFKFWI).

Belongs to the CemA family.

The protein localises to the plastid. The protein resides in the chloroplast inner membrane. It catalyses the reaction K(+)(in) + H(+)(out) = K(+)(out) + H(+)(in). Functionally, contributes to K(+)/H(+) antiport activity by supporting proton efflux to control proton extrusion and homeostasis in chloroplasts in a light-dependent manner to modulate photosynthesis. Prevents excessive induction of non-photochemical quenching (NPQ) under continuous-light conditions. Indirectly promotes efficient inorganic carbon uptake into chloroplasts. The polypeptide is Potassium/proton antiporter CemA (Panax ginseng (Korean ginseng)).